Here is a 182-residue protein sequence, read N- to C-terminus: ATP-dependent protease subunit HslV (182 aa).

The active site involves threonine 9. Na(+) contacts are provided by alanine 167, cysteine 170, and threonine 173.

The protein belongs to the peptidase T1B family. HslV subfamily. In terms of assembly, a double ring-shaped homohexamer of HslV is capped on each side by a ring-shaped HslU homohexamer. The assembly of the HslU/HslV complex is dependent on binding of ATP.

Its subcellular location is the cytoplasm. The enzyme catalyses ATP-dependent cleavage of peptide bonds with broad specificity.. With respect to regulation, allosterically activated by HslU binding. In terms of biological role, protease subunit of a proteasome-like degradation complex believed to be a general protein degrading machinery. The sequence is that of ATP-dependent protease subunit HslV from Enterococcus faecalis (strain ATCC 700802 / V583).